A 505-amino-acid polypeptide reads, in one-letter code: Probable inorganic carbon transporter subunit DabB (505 aa).

A run of 13 helical transmembrane segments spans residues 9–29 (SLLTLFFIMLMASGISGLLFL), 37–57 (FVRIHIGILALPLLVSLLILA), 68–88 (WHLDSLACLMTFFVLAIGFII), 105–123 (YFTLFTFTTGAASMTWLSG), 162–182 (LFLLSWFSLFFAMMWLFHATG), 204–224 (TGIQLLIVLAVIIPAAQWPFQ), 231–251 (IVAPTPVSAIMHAGLVNAGGI), 259–279 (LFHGGIASIILLLLASISVLI), 303–323 (GFMLIQCALGAYIAAIIHLIL), 355–375 (LWVMAGRILSLVIGVAFWLTA), 382–402 (LISALILGWSLSVSWDQLVAF), 410–430 (IAGLTVLGGAALVYFIIHHLF), and 446–466 (MSAVMIVVCLLLFGSALGTWV).

Belongs to the inorganic carbon transporter (TC 9.A.2) DabB family. Forms a complex with DabA.

The protein resides in the cell membrane. Its function is as follows. Part of an energy-coupled inorganic carbon pump. The polypeptide is Probable inorganic carbon transporter subunit DabB (Bacillus subtilis (strain 168)).